Consider the following 963-residue polypeptide: MERREEQLGAAGAGAAPALDFTVENVEKALHQLYYDPNIENKNLAQKWLMQAQVSPQAWHFSWQLLQPDKVPEIQYFGASALHIKISRYWSDIPTDQYESLKAHSFTQITRFASGSKIVLTRLCVALASLALSMMPDAWPCAVADMVRLFQAEDSPVDSQGRCLALLELLTVLPEEFQTSRLPQYRKGLVRASLAVECGAVFPLLEQLLQQPSSPSCVRQKVLKCFSSWVQLEVPLQDCEALIQAAFAALQDSELFDSSVEAIVNAISQPDAQRYVNTLLKLIPLVLGLQEQLRQAVQNGDMETSHGICRIAVALGENHSRALLDQVEHWQSFLALVNMIMFCTGIPGHYPVNETTSSLTLTFWYTLQDDILSFEAEKQAVYQQVYRPVYFQLVDVLLHKAQFPSDEEYGFWSSDEKEQFRIYRVDISDTLMYVYEMLGAELLSNLYDKLGRLLTSSEEPYSWQHTEALLYGFQSIAETIDVNYSDVVPGLIGLIPRISISNVQLADTVMFTIGALSEWLADHPVMINSVLPLVLHALGNPELSVSSVSTLKKICRECKYELPPYAANIVAVSQDVLMKQIHKTSQCMWLMQALGFLLSALQVEENLKNLHSLISTYIQQLEKLAEEIPKPSNKLAIVHILGLLSNLFTTLDVSHHEDDHEGPELRKLPVPQGPNPVVVVLQQVFQLIQKVLSKWLSDAQVVEAVCAIFEKSVKTLLDDFAPMVPQLCEMLGRMYSTVPQASALDLTRQLVHIFAHEPAHFPPIEALFLLVTSVTLSLFQQGPRDHPDIVDSFMQLLAQALKRKPDLFQCERLDVKAVFQCAVLALKFPEAPTVKASCGFFTELLPRCGEIESVGKVVQEDGRMLLIAVLEAIGGQASRSLMDCFADILFALNKHCFSLLSMWIKEALQPPGFPSARLSPEQKDTFSQQILRERVNKRRVKEMVKEFTLLCRGLHGTDYTADY.

20 HEAT repeats span residues Glu24–Val54, Pro56–Arg88, Thr95–Met135, Ala142–Thr179, Leu194–Gln231, Leu236–Ser268, Val276–Asp325, Trp330–Leu372, Glu375–Leu438, Ala440–Ile476, Val487–Asp522, Pro524–Cys558, Leu562–Ala600, Val603–Phe648, Pro676–Leu716, Phe720–Phe754, Phe761–Arg803, Val815–Leu845, Glu860–Asn893, and Phe897–Leu931. An Importin N-terminal domain is found at Ala45–Arg111.

Belongs to the importin beta family. As to quaternary structure, interacts with UBC9, RAN, RBM8A, eIF-1A and PAX6. In terms of tissue distribution, expressed in fetal brain, heart, intestine and kidney.

The protein resides in the cytoplasm. Its subcellular location is the nucleus. In terms of biological role, functions in nuclear protein import as nuclear transport receptor. Serves as receptor for nuclear localization signals (NLS) in cargo substrates. Is thought to mediate docking of the importin/substrate complex to the nuclear pore complex (NPC) through binding to nucleoporin and the complex is subsequently translocated through the pore by an energy requiring, Ran-dependent mechanism. At the nucleoplasmic side of the NPC, Ran binds to the importin, the importin/substrate complex dissociates and importin is re-exported from the nucleus to the cytoplasm where GTP hydrolysis releases Ran. The directionality of nuclear import is thought to be conferred by an asymmetric distribution of the GTP- and GDP-bound forms of Ran between the cytoplasm and nucleus. Mediates the nuclear import of UBC9, the RBM8A/MAGOH complex, PAX6 and probably other members of the paired homeobox family. Also mediates nuclear export of eIF-1A, and the cytoplasmic release of eIF-1A is triggered by the loading of import substrates onto IPO13. The protein is Importin-13 (Ipo13) of Rattus norvegicus (Rat).